Here is a 475-residue protein sequence, read N- to C-terminus: Ribulose bisphosphate carboxylase large chain (475 aa).

The propeptide occupies 1–2; the sequence is MS. P3 bears the N-acetylproline mark. Residues T65, N123, and T173 each contribute to the substrate site. Catalysis depends on K175, which acts as the Proton acceptor. K177 provides a ligand contact to substrate. Positions 201, 203, and 204 each coordinate Mg(2+). An N6-carboxylysine modification is found at K201. Residues E204, H294, R295, H327, K334, S379, G381, G403, and G404 each contribute to the substrate site. H294 (proton acceptor) is an active-site residue.

The protein belongs to the RuBisCO large chain family. Type I subfamily. Heterohexadecamer of 8 large chains and 8 small chains. Requires Mg(2+) as cofactor. Post-translationally, the disulfide bond which can form between Cys-247 in the large chain dimeric partners within the hexadecamer appears to be associated with oxidative stress and protein turnover. The disulfide bonds reported in 1RBO may be the result of oxidation during crystallization.

It is found in the plastid. The protein resides in the chloroplast. It catalyses the reaction 2 (2R)-3-phosphoglycerate + 2 H(+) = D-ribulose 1,5-bisphosphate + CO2 + H2O. The catalysed reaction is D-ribulose 1,5-bisphosphate + O2 = 2-phosphoglycolate + (2R)-3-phosphoglycerate + 2 H(+). With respect to regulation, abscisic acid (ABA) causes weak inhibition of RuBisCO catalytic activity, but more potent inhibition of RuBisCO activation. In terms of biological role, ruBisCO catalyzes two reactions: the carboxylation of D-ribulose 1,5-bisphosphate, the primary event in carbon dioxide fixation, as well as the oxidative fragmentation of the pentose substrate in the photorespiration process. Both reactions occur simultaneously and in competition at the same active site. Binds to abscisic acid (ABA) which has weakly inhibits carboxylation and more strongly inhibits enzyme activation. The chain is Ribulose bisphosphate carboxylase large chain from Spinacia oleracea (Spinach).